The primary structure comprises 1567 residues: Ice nucleation protein (1567 aa).

Over residues 130 to 185 (PAAEPSAPATQATSATLPTPATPSTQATPSTQSTQSTQSTEATQSTEATPVATVAA) the composition is skewed to low complexity. Disordered stretches follow at residues 130 to 195 (PAAE…QQHD), 270 to 329 (YGST…KGSD), 356 to 378 (AGSESSLTAGYGSTQTARKGSDV), 449 to 474 (TQTSGSDSSLTAGYGSTQTARKGSDI), 502 to 529 (SESSLTAGYGSTQTAQQDSSLTTGYGST), 594 to 620 (QTAGSDSSLTAGYGSTQTAREGSDVTA), 642 to 668 (QTSGSDSSLTAGYGSTQTARKGSDVTA), 689 to 716 (TQTSGSDSSLTAGYGSTQTARKGSDVTA), 738 to 764 (QTSGSDSSLTAGYGSTQTARKGSDVTA), 785 to 810 (TQTSGSDSSLTAGYGSTQTARKGSDI), 833 to 860 (TQTSGSDSSLTAGYGSTQTAREGSDVTA), 929 to 959 (TQTSGSDSSLTAGYGSTQTARKGSDMTAGYG), and 977 to 1004 (TQTSGSDSSLTAGYGSTQTAREGSDVTA). Positions 270 to 282 (YGSTQTAQEGSRL) are enriched in polar residues. Residues 283 to 296 (TSGYGSTATSGSDS) show a composition bias toward low complexity. Composition is skewed to polar residues over residues 302 to 325 (YGSTQTAGSESSLTAGYGSTQTAR), 356 to 373 (AGSESSLTAGYGSTQTAR), 449 to 469 (TQTSGSDSSLTAGYGSTQTAR), and 502 to 519 (SESSLTAGYGSTQTAQQD). A compositionally biased stretch (low complexity) spans 520–529 (SSLTTGYGST). Polar residues-rich tracts occupy residues 594 to 613 (QTAGSDSSLTAGYGSTQTAR), 642 to 661 (QTSGSDSSLTAGYGSTQTAR), 689 to 709 (TQTSGSDSSLTAGYGSTQTAR), 738 to 757 (QTSGSDSSLTAGYGSTQTAR), 785 to 805 (TQTSGSDSSLTAGYGSTQTAR), 833 to 853 (TQTSGSDSSLTAGYGSTQTAR), 929 to 949 (TQTSGSDSSLTAGYGSTQTAR), and 977 to 997 (TQTSGSDSSLTAGYGSTQTAR).

It belongs to the bacterial ice nucleation protein family.

The protein localises to the cell outer membrane. Its function is as follows. Ice nucleation proteins enable bacteria to nucleate crystallization in supercooled water. The sequence is that of Ice nucleation protein (inaX) from Xanthomonas campestris pv. translucens.